The following is a 355-amino-acid chain: Guanine nucleotide-binding protein subunit alpha-14 (355 aa).

In terms of domain architecture, G-alpha spans 34-355 (RELKLLLLGT…QLNLREFNLV (322 aa)). The tract at residues 37–50 (KLLLLGTGESGKST) is G1 motif. GTP-binding positions include 42 to 49 (GTGESGKS), 176 to 182 (LRVRVPT), 201 to 205 (DVGGQ), 270 to 273 (NKKD), and A327. Mg(2+) is bound by residues S49 and T182. The interval 174 to 182 (DVLRVRVPT) is G2 motif. Residues 197–206 (FRMVDVGGQR) form a G3 motif region. The interval 266–273 (ILFLNKKD) is G4 motif. The interval 325–330 (TCATDT) is G5 motif.

It belongs to the G-alpha family. G(q) subfamily. G proteins are composed of 3 units; alpha, beta and gamma. The alpha chain contains the guanine nucleotide binding site.

Guanine nucleotide-binding proteins (G proteins) are involved as modulators or transducers in various transmembrane signaling systems. In Bos taurus (Bovine), this protein is Guanine nucleotide-binding protein subunit alpha-14 (GNA14).